A 143-amino-acid polypeptide reads, in one-letter code: Flagellar assembly factor FliW (143 aa).

This sequence belongs to the FliW family. As to quaternary structure, interacts with translational regulator CsrA and flagellin(s).

The protein resides in the cytoplasm. Its function is as follows. Acts as an anti-CsrA protein, binds CsrA and prevents it from repressing translation of its target genes, one of which is flagellin. Binds to flagellin and participates in the assembly of the flagellum. In Clostridium botulinum (strain 657 / Type Ba4), this protein is Flagellar assembly factor FliW.